The following is a 413-amino-acid chain: Putative glutamate--cysteine ligase 2 (413 aa).

Positions 392–413 (GGVCALSTPQGDPLPGWAERLH) are disordered.

The protein belongs to the glutamate--cysteine ligase type 2 family. YbdK subfamily.

It carries out the reaction L-cysteine + L-glutamate + ATP = gamma-L-glutamyl-L-cysteine + ADP + phosphate + H(+). Its function is as follows. ATP-dependent carboxylate-amine ligase which exhibits weak glutamate--cysteine ligase activity. In Bordetella bronchiseptica (strain ATCC BAA-588 / NCTC 13252 / RB50) (Alcaligenes bronchisepticus), this protein is Putative glutamate--cysteine ligase 2.